The chain runs to 557 residues: Chaperonin GroEL 1 (557 aa).

ATP is bound by residues 29–32 (TLGP), lysine 50, 86–90 (DGTTT), glycine 416, and aspartate 495.

This sequence belongs to the chaperonin (HSP60) family. In terms of assembly, forms a cylinder of 14 subunits composed of two heptameric rings stacked back-to-back. Interacts with the co-chaperonin GroES.

Its subcellular location is the cytoplasm. The catalysed reaction is ATP + H2O + a folded polypeptide = ADP + phosphate + an unfolded polypeptide.. In terms of biological role, together with its co-chaperonin GroES, plays an essential role in assisting protein folding. The GroEL-GroES system forms a nano-cage that allows encapsulation of the non-native substrate proteins and provides a physical environment optimized to promote and accelerate protein folding. In Protochlamydia amoebophila (strain UWE25), this protein is Chaperonin GroEL 1.